The primary structure comprises 738 residues: Ethylene receptor (738 aa).

Helical transmembrane passes span 23 to 43 (ISDF…IYFV), 54 to 74 (VLVQ…INLW), and 89 to 109 (IAKV…VHII). Cu cation-binding residues include Cys65 and His69. Positions 158-307 (DRHTILRTTL…VVADQVAVAL (150 aa)) constitute a GAF domain. The region spanning 350 to 589 (VMNHEMRTPM…IFIVKLGIPE (240 aa)) is the Histidine kinase domain. His353 is subject to Phosphohistidine; by autocatalysis. A Response regulatory domain is found at 615–730 (KVLLMDDNGV…KMRSVLSDLL (116 aa)). Position 663 is a 4-aspartylphosphate (Asp663).

It belongs to the ethylene receptor family. In terms of assembly, homodimer; disulfide-linked. It depends on Cu cation as a cofactor. In terms of processing, activation probably requires a transfer of a phosphate group between a His in the transmitter domain and an Asp of the receiver domain. As to expression, higher expression in arils than in seeds.

It is found in the endoplasmic reticulum membrane. It carries out the reaction ATP + protein L-histidine = ADP + protein N-phospho-L-histidine.. Its function is as follows. May act early in the ethylene signal transduction pathway, possibly as an ethylene receptor, or as a regulator of the pathway. This is Ethylene receptor (ETR1) from Passiflora edulis (Passion fruit).